The following is a 647-amino-acid chain: MARKSDEDTNPMDKFMDRLRGSPGDGGPGRPDPSQRKVHFSIWYFILALLLIVWMQTYMGEQQSEKISYSEFKQRVHDGNVQNLVIEHDRITGTMKENDGPGRRFNTIRVEDPELVKQLEAKNIRFSGDVQNPWLGLITWWLLPFAIMIFFWSFLMRRMGGGPQGVLSVGKARVKIFAEKEITITFDDVAGIDEAKGELEEIVQFLKDPGKFQRLGGRIPKGVLLVGAPGTGKTLLAKAVAGEAGVPFFSMSGSEFVEMFVGVGAARVRDLFGQAKDHAPCIIFIDELDALGKARGLNPIGGHDEREQTLNQLLVEMDGFDPRSGVIIMAATNRPEILDPALLRPGRFDRHVAIDKPDIRGREAILRVHVKEVKLGSEVDLKKIAGMTPGFVGADLANLVNEAALVAARRDRDEVTMADFQEAADRIIGGLEKKNRAMNPKEKEIVAYHEAGHALVAMLLPNVDPVNKVSIIPRGIAALGYTQQLPTEDRYLMTRNELLDRLQVLLGGRVSEEIIFGDVSTGAQNDLQRATDIARSMVMEYGMSERLGPLTYTRDPRSAHLDLGLGSRERDYSEMIAQEIDEEITRIVEDAHEKVRATLKRERGCLEKLAKILLEKESIDGEELKQFCQEVKSHIARDPVQVEGGAA.

The segment at 1 to 33 (MARKSDEDTNPMDKFMDRLRGSPGDGGPGRPDP) is disordered. Topologically, residues 1–39 (MARKSDEDTNPMDKFMDRLRGSPGDGGPGRPDPSQRKVH) are cytoplasmic. A helical membrane pass occupies residues 40–60 (FSIWYFILALLLIVWMQTYMG). Topologically, residues 61 to 134 (EQQSEKISYS…RFSGDVQNPW (74 aa)) are periplasmic. A helical membrane pass occupies residues 135-155 (LGLITWWLLPFAIMIFFWSFL). At 156-647 (MRRMGGGPQG…DPVQVEGGAA (492 aa)) the chain is on the cytoplasmic side. 227-234 (GAPGTGKT) is a binding site for ATP. A Zn(2+)-binding site is contributed by His-449. The active site involves Glu-450. Zn(2+) is bound by residues His-453 and Asp-526.

This sequence in the central section; belongs to the AAA ATPase family. In the C-terminal section; belongs to the peptidase M41 family. Homohexamer. It depends on Zn(2+) as a cofactor.

It localises to the cell inner membrane. Functionally, acts as a processive, ATP-dependent zinc metallopeptidase for both cytoplasmic and membrane proteins. Plays a role in the quality control of integral membrane proteins. This Syntrophobacter fumaroxidans (strain DSM 10017 / MPOB) protein is ATP-dependent zinc metalloprotease FtsH.